The following is a 465-amino-acid chain: Antithrombin-III (465 aa).

The signal sequence occupies residues 1–32 (MYSPGAGSGAAGERKLCLLSLLLIGALGCAIC). 2 disulfide bridges follow: cysteine 41/cysteine 161 and cysteine 54/cysteine 128. Residue threonine 64 is modified to Phosphothreonine. Serine 69 is subject to Phosphoserine. Tryptophan 82 serves as a coordination point for heparin. Asparagine 129 carries N-linked (GlcNAc...) asparagine glycosylation. Arginine 162 is a binding site for heparin. Asparagine 168 carries an N-linked (GlcNAc...) asparagine glycan. Position 178 (arginine 178) interacts with heparin. N-linked (GlcNAc...) asparagine glycans are attached at residues asparagine 188 and asparagine 225. Cysteine 280 and cysteine 463 are joined by a disulfide.

Belongs to the serpin family. In terms of assembly, forms protease inhibiting heterodimer with TMPRSS7. In terms of processing, phosphorylated by FAM20C in the extracellular medium. Plasma.

Its subcellular location is the secreted. The protein resides in the extracellular space. In terms of biological role, most important serine protease inhibitor in plasma that regulates the blood coagulation cascade. AT-III inhibits thrombin, matriptase-3/TMPRSS7, as well as factors IXa, Xa and XIa. Its inhibitory activity is greatly enhanced in the presence of heparin. In Mus musculus (Mouse), this protein is Antithrombin-III (Serpinc1).